Consider the following 355-residue polypeptide: MKIRIDIPHHPYDIQIEKGCMAQAGQWLRELWQPQKVVIVTDNHVASLYAEKVKLSLEDAGFQVAVFDFLEGEERKNLTTVQKVYEFLVKQGLTRSDGIVALGGGVVGDLAGFVASTYMRGIHFVQIPTSLTAQVDSSIGGKTGVNTPFAKNMVGTFAQPDGVLIDPLVLETLGKRELIEGMGEVIKYGLIEDPELWALLTELNGSVESILEHAETLIEHSCQVKRKMVVEDELDNGIRLYLNFGHTIGHAIEATAGYGKVMHGEAVAMGMVQISKVAEEKGLMPAGITQSITEMCQKFGLPVDYENWEVDKLYQALTHDKKTRGNTLKLVLVSELGSAIIHPVSLEEMKDYLVK.

NAD(+)-binding positions include Glu-71–Lys-76, Gly-105–Asp-109, Thr-129–Ser-130, Lys-142, and Lys-151. 3 residues coordinate Zn(2+): Glu-184, His-246, and His-263.

Belongs to the sugar phosphate cyclases superfamily. Dehydroquinate synthase family. Requires Co(2+) as cofactor. The cofactor is Zn(2+). NAD(+) serves as cofactor.

It is found in the cytoplasm. It catalyses the reaction 7-phospho-2-dehydro-3-deoxy-D-arabino-heptonate = 3-dehydroquinate + phosphate. It functions in the pathway metabolic intermediate biosynthesis; chorismate biosynthesis; chorismate from D-erythrose 4-phosphate and phosphoenolpyruvate: step 2/7. Its function is as follows. Catalyzes the conversion of 3-deoxy-D-arabino-heptulosonate 7-phosphate (DAHP) to dehydroquinate (DHQ). This chain is 3-dehydroquinate synthase, found in Streptococcus pneumoniae (strain JJA).